The following is a 100-amino-acid chain: Small ribosomal subunit protein uS14c (100 aa).

Belongs to the universal ribosomal protein uS14 family. In terms of assembly, part of the 30S ribosomal subunit.

Its subcellular location is the plastid. The protein resides in the chloroplast. Its function is as follows. Binds 16S rRNA, required for the assembly of 30S particles. The protein is Small ribosomal subunit protein uS14c of Draba nemorosa (Woodland whitlowgrass).